The sequence spans 422 residues: Dihydroorotase (422 aa).

Residues histidine 61 and histidine 63 each contribute to the Zn(2+) site. Substrate-binding positions include 63–65 (HLR) and asparagine 95. Position 153 (aspartate 153) interacts with Zn(2+). Asparagine 278 is a substrate binding site. Aspartate 305 lines the Zn(2+) pocket. Aspartate 305 is a catalytic residue. Residues histidine 309 and 322 to 323 (PG) each bind substrate.

This sequence belongs to the metallo-dependent hydrolases superfamily. DHOase family. Class I DHOase subfamily. Monomer. Forms a 1:1 stoichiometric complex with PyrB. The complex exists as an equilibrium mixture of heterohexamers, composed of 3 PyrC and 3 PyrB subunits, and dodecamers. The complex has both DHOase and ATCase activities. It depends on Zn(2+) as a cofactor.

It carries out the reaction (S)-dihydroorotate + H2O = N-carbamoyl-L-aspartate + H(+). Its pathway is pyrimidine metabolism; UMP biosynthesis via de novo pathway; (S)-dihydroorotate from bicarbonate: step 3/3. With respect to regulation, the monomer has very low activity by itself. Activated several thousandfold by formation of a complex with PyrB aspartate carbamoyltransferase (ATCase). Its function is as follows. Catalyzes the reversible cyclization of carbamoyl aspartate to dihydroorotate. The polypeptide is Dihydroorotase (Aquifex aeolicus (strain VF5)).